Here is a 900-residue protein sequence, read N- to C-terminus: Zinc finger protein 62 homolog (900 aa).

Residues 1–97 (MSHLKTSTED…EASEKSLHLS (97 aa)) are disordered. A Glycyl lysine isopeptide (Lys-Gly) (interchain with G-Cter in SUMO2) cross-link involves residue K5. Over residues 9 to 18 (EDEEPTEEYE) the composition is skewed to acidic residues. Over residues 47 to 73 (SKVENQQKKPVENRMKEDKSSIREAIS) the composition is skewed to basic and acidic residues. Glycyl lysine isopeptide (Lys-Gly) (interchain with G-Cter in SUMO2) cross-links involve residues K48, K62, K65, K82, and K92. The segment covering 83 to 94 (TEQEGEASEKSL) has biased composition (basic and acidic residues). 13 C2H2-type zinc fingers span residues 225 to 247 (CKCD…KRIH), 253 to 275 (YECG…KRIH), 281 to 303 (YECD…KRIH), 309 to 331 (YECD…KSIH), 337 to 359 (YKCD…KVIH), 365 to 387 (YECD…KRIH), 393 to 415 (YKCD…KSIH), 421 to 443 (HECK…RTIH), 449 to 471 (YVCD…RRLH), 477 to 499 (YKCD…KGIH), 505 to 527 (YKCS…KRIH), 533 to 555 (FGCD…KRIH), and 561 to 583 (YKCE…KSVH). Residue K587 forms a Glycyl lysine isopeptide (Lys-Gly) (interchain with G-Cter in SUMO2) linkage. 10 C2H2-type zinc fingers span residues 589–611 (FKCD…KKVH), 617–639 (YKCD…RRVH), 645–667 (YECD…KRIH), 673–695 (YECD…KSTH), 701–723 (HTCD…KRVH), 729–751 (FKCV…KRIH), 757–779 (YVCD…KRIH), 785–807 (YECD…KSVH), 813–834 (YNCE…KRIH), and 840–862 (YRCN…KRTH). K748 participates in a covalent cross-link: Glycyl lysine isopeptide (Lys-Gly) (interchain with G-Cter in SUMO2). A Glycyl lysine isopeptide (Lys-Gly) (interchain with G-Cter in SUMO2) cross-link involves residue K882.

It belongs to the krueppel C2H2-type zinc-finger protein family.

The protein localises to the nucleus. May play a role in differentiating skeletal muscle. The polypeptide is Zinc finger protein 62 homolog (ZFP62) (Homo sapiens (Human)).